The sequence spans 943 residues: MTDYKATLNLPETAFPMKAGLPQREPETLRHWNSIGLYRKLRQIGEGRQKFILHDGPPYANGNIHIGHAVNKILKDMIVRSKTLAGFDAPYVPGWDCHGLPIEHKVETTFGKNQPADLTRERCRAYAAEQVEGQKADFIRLGVLGDWENPYKTMDFANEAGEIRALAKMVEGGFVFKGLKPVNWCFDCGSALAEAEVEYQDKKSDAIDVFFPVGDADKLAAAFGLAQLDKPAGIVIWTTTPWTIPANQALNVHPDFIYALVDCGDRLLLLAEELVEGCLARYGLRGQVLATAKGEALELIRFRHPFYERFSPVYLADYVGLDAGTGIVHSAPAYGEDDFRSCKRYGMSNDEILSPVQSNGVYVESLPFFGGQFIWKANPNIVAKLAEVGCLLKHETISHSYMHCWRHKTPLIYRATAQWFVGMDSKAKDGTTLRERALAAIEQTRFVPAWGQARLHGMIAGRPDWCISRQRNWGVPIPFFLHKESGELHPRTVELMEEVARRVEQKGIEAWFRLDPAELLGAEADQYDKIADTLDVWFDSGTTHWHVMRGSHPMGHDQGPRADLYLEGSDQHRGWFHSSLLTGAAIDGHAPYRGLLTHGFTVDENGRKMSKSLGNVIAPQEITDSMGADILRLWVSATDYSGEMAVSKQILQRSADAYRRIRNTARFLLANLSGFDPAKDLLAAEDMLALDRWAVDRALLLQREVEEAFDSYRFWVVYQKVHNFCVQELGGFYLDIIKDRQYTCAADSVARRSCQSAMYHIGEALVRWIAPILAFTAEEIWQYLPGERNESVMLNTWYQGFAELPDGFALDRAFWEQVMAVKAAVNKELENRRNAKAIGGNLQAEVVLFAEPALAGRLALLGDELRFVLITSAAQVQPLGAAPADAVDTEVAGLRIQVSKSVHTKCARCWHHREDVGLDPAHPEICGRCVENIQGEGEVRQYA.

The short motif at 58–68 (PYANGNIHIGH) is the 'HIGH' region element. Residue Glu567 participates in L-isoleucyl-5'-AMP binding. Positions 608–612 (KMSKS) match the 'KMSKS' region motif. Lys611 provides a ligand contact to ATP. 4 residues coordinate Zn(2+): Cys906, Cys909, Cys926, and Cys929.

Belongs to the class-I aminoacyl-tRNA synthetase family. IleS type 1 subfamily. In terms of assembly, monomer. Zn(2+) is required as a cofactor.

It is found in the cytoplasm. It carries out the reaction tRNA(Ile) + L-isoleucine + ATP = L-isoleucyl-tRNA(Ile) + AMP + diphosphate. Its function is as follows. Catalyzes the attachment of isoleucine to tRNA(Ile). As IleRS can inadvertently accommodate and process structurally similar amino acids such as valine, to avoid such errors it has two additional distinct tRNA(Ile)-dependent editing activities. One activity is designated as 'pretransfer' editing and involves the hydrolysis of activated Val-AMP. The other activity is designated 'posttransfer' editing and involves deacylation of mischarged Val-tRNA(Ile). This Azotobacter vinelandii (strain DJ / ATCC BAA-1303) protein is Isoleucine--tRNA ligase.